Consider the following 951-residue polypeptide: Valine--tRNA ligase (951 aa).

Positions 42–52 match the 'HIGH' region motif; that stretch reads PNVTGSLHMGH. The 'KMSKS' region motif lies at 554–558; it reads KMSKS. Lys-557 lines the ATP pocket. Residues 880 to 944 are a coiled coil; that stretch reads AGLINKEDEL…AEAKAKLIEQ (65 aa).

It belongs to the class-I aminoacyl-tRNA synthetase family. ValS type 1 subfamily. In terms of assembly, monomer.

Its subcellular location is the cytoplasm. It catalyses the reaction tRNA(Val) + L-valine + ATP = L-valyl-tRNA(Val) + AMP + diphosphate. Its function is as follows. Catalyzes the attachment of valine to tRNA(Val). As ValRS can inadvertently accommodate and process structurally similar amino acids such as threonine, to avoid such errors, it has a 'posttransfer' editing activity that hydrolyzes mischarged Thr-tRNA(Val) in a tRNA-dependent manner. The polypeptide is Valine--tRNA ligase (Shigella dysenteriae serotype 1 (strain Sd197)).